We begin with the raw amino-acid sequence, 206 residues long: Large ribosomal subunit protein uL4 (206 aa).

The interval 46–78 (GNRAQKDREQVKHTTKKPWRQKGTGRARAGMSS) is disordered. Basic residues predominate over residues 58-70 (HTTKKPWRQKGTG).

This sequence belongs to the universal ribosomal protein uL4 family. Part of the 50S ribosomal subunit.

Functionally, one of the primary rRNA binding proteins, this protein initially binds near the 5'-end of the 23S rRNA. It is important during the early stages of 50S assembly. It makes multiple contacts with different domains of the 23S rRNA in the assembled 50S subunit and ribosome. Forms part of the polypeptide exit tunnel. The sequence is that of Large ribosomal subunit protein uL4 from Burkholderia lata (strain ATCC 17760 / DSM 23089 / LMG 22485 / NCIMB 9086 / R18194 / 383).